The primary structure comprises 481 residues: Protein FIZZY-RELATED 3 (481 aa).

The interval 100 to 165 is disordered; the sequence is PAGGQGSASS…RKVPKTPHKV (66 aa). Low complexity predominate over residues 125–136; that stretch reads SNSSPSSPFSPS. Residues 154-163 are compositionally biased toward basic residues; it reads PPRKVPKTPH. 7 WD repeats span residues 172–209, 213–252, 255–292, 296–335, 338–380, 382–423, and 426–465; these read QDDF…VTKL, GPND…RVRT, GHQT…DFVS, GHKS…PILK, EHTA…QLNS, DTGS…KVAT, and GHSM…KMQT.

Belongs to the WD repeat CDC20/Fizzy family. In terms of assembly, associates with the APC/C complex. Interacts with CDC20-1, CDC20-2, CYCA1-1, CYCA3-4, CYCB1-1 and CYCB1-2. Binds to GIG1 and PYM.

Its pathway is protein modification; protein ubiquitination. In terms of biological role, activator protein that regulates the ubiquitin ligase activity and substrate specificity of the anaphase promoting complex/cyclosome (APC/C). The sequence is that of Protein FIZZY-RELATED 3 (FZR3) from Arabidopsis thaliana (Mouse-ear cress).